Reading from the N-terminus, the 594-residue chain is Probable Xaa-Pro aminopeptidase P (594 aa).

Mn(2+)-binding residues include Asp-391, Asp-402, Glu-500, and Glu-514.

Belongs to the peptidase M24B family. Mn(2+) is required as a cofactor.

The enzyme catalyses Release of any N-terminal amino acid, including proline, that is linked to proline, even from a dipeptide or tripeptide.. In terms of biological role, catalyzes the removal of a penultimate prolyl residue from the N-termini of peptides. The protein is Probable Xaa-Pro aminopeptidase P (ampp) of Pyrenophora tritici-repentis (strain Pt-1C-BFP) (Wheat tan spot fungus).